The following is a 263-amino-acid chain: Chorismate mutase 2 (263 aa).

A Chorismate mutase domain is found at 3–256 (CGDYDDKLSL…QVEYLLRRLD (254 aa)).

Homodimer. As to expression, expressed in root, stem, stigma, anther, leaf, petal tube, petal limb and sepal tissues with highest levels in petal tubes and stems.

The protein localises to the cytoplasm. It is found in the cytosol. The catalysed reaction is chorismate = prephenate. It participates in metabolic intermediate biosynthesis; prephenate biosynthesis; prephenate from chorismate: step 1/1. No allosteric regulation. Its function is as follows. Mediates the conversion of chorismate to prephenate. The sequence is that of Chorismate mutase 2 from Petunia hybrida (Petunia).